Consider the following 324-residue polypeptide: G patch domain-containing protein 4 (324 aa).

Disordered regions lie at residues 1–30 (MSAS…GKGL) and 123–324 (LSGG…NKSE). In terms of domain architecture, G-patch spans 11–57 (GMKFAEEQMHKHGWKEGKGLGRRENGICEAIKVKVKCDHAGVGHNSA). Positions 14–30 (FAEEQMHKHGWKEGKGL) are enriched in basic and acidic residues. Low complexity predominate over residues 131–141 (KEPSSSESSDS). Residues 186 to 215 (SRLEEQEREFLAKYGKKEQKNKERDEKLER) are compositionally biased toward basic and acidic residues. Positions 244-253 (HKKKKKKRKR) are enriched in basic residues. A compositionally biased stretch (basic and acidic residues) spans 254–270 (ADSERKEESQENGHEEE). A compositionally biased stretch (polar residues) spans 296 to 309 (PSTQEEQPTESSDF). Basic residues predominate over residues 312-324 (KPKKKKKKKNKSE).

This is G patch domain-containing protein 4 (gpatch4) from Xenopus laevis (African clawed frog).